A 142-amino-acid chain; its full sequence is MELRAFCVILLITILAVSSQAAKNKKEKGKKGASDCTEWTWGSCIPNSKDCGAGTREGTCKEETRKLKCKIPCNWKKDFGADCKYKFENWGECNATTGQKVRSGTLKKALYNADCQQTVEAAKPCSLKTKSKSKGKKGKGKE.

The first 20 residues, 1-20 (MELRAFCVILLITILAVSSQ), serve as a signal peptide directing secretion. Cystine bridges form between Cys36/Cys60, Cys44/Cys69, Cys51/Cys73, Cys83/Cys115, and Cys93/Cys125.

It belongs to the pleiotrophin family. In terms of tissue distribution, in adults, expression is highest in the brain, eye and bone, with lower expression in the heart and lung. Not expressed in the ovary. In the tailbud stage embryo, expressed in the head and tail regions as well as in the central nervous system (CNS).

It is found in the secreted. Its function is as follows. Secreted protein that functions as a cytokine and growth factor and mediates its signal through cell-surface proteoglycan and non-proteoglycan receptors. Binds cell-surface proteoglycan receptors via their chondroitin sulfate (CS) groups. Thereby regulates many processes like inflammatory response, cell proliferation, cell adhesion, cell growth, cell survival, tissue regeneration, cell differentiation and cell migration. Inhibits mesoderm formation and promotes neural formation during development. Plays a role in development of the neuromuscular junction (NMJ). Has antibacterial activity against both Gram-positive and Gram-negative bacteria. The polypeptide is Midkine-B (mdk-b) (Xenopus laevis (African clawed frog)).